A 250-amino-acid chain; its full sequence is Ribosomal RNA small subunit methyltransferase J (250 aa).

S-adenosyl-L-methionine contacts are provided by residues 101–102 (RD), 117–118 (ER), 153–154 (SS), and Asp-171.

The protein belongs to the methyltransferase superfamily. RsmJ family.

The protein localises to the cytoplasm. It catalyses the reaction guanosine(1516) in 16S rRNA + S-adenosyl-L-methionine = N(2)-methylguanosine(1516) in 16S rRNA + S-adenosyl-L-homocysteine + H(+). In terms of biological role, specifically methylates the guanosine in position 1516 of 16S rRNA. The protein is Ribosomal RNA small subunit methyltransferase J of Shigella flexneri serotype 5b (strain 8401).